A 450-amino-acid polypeptide reads, in one-letter code: Bestrophin homolog 1 (450 aa).

Topologically, residues 1–31 are cytoplasmic; the sequence is MTINYHKEIMTSHPWTFFLLLFKWKGSIWKA. The chain crosses the membrane as a helical span at residues 32-51; the sequence is VYMETIIFLICYGIISVIYK. Residues 52 to 60 lie on the Extracellular side of the membrane; sequence TAMGESSQR. The chain crosses the membrane as a helical span at residues 61–82; the sequence is TFESLVRYFDKRLSYIPLEFVL. Over 83 to 242 the chain is Cytoplasmic; the sequence is GFFVTTVVNR…DWVPLPLMYP (160 aa). A helical transmembrane segment spans residues 243–260; that stretch reads QLVCLAVNLYFLVSIIAR. At 261 to 278 the chain is on the extracellular side; that stretch reads QLVIEKHKMVDEVDVYFP. A helical membrane pass occupies residues 279-292; that stretch reads VMTFLQFIFYMGWL. The Cytoplasmic portion of the chain corresponds to 293-450; it reads KVIDVMLNPF…WKIPTNPQKF (158 aa). Ca(2+) contacts are provided by asparagine 300, aspartate 305, and aspartate 308.

Belongs to the anion channel-forming bestrophin (TC 1.A.46) family. Calcium-sensitive chloride channel subfamily. In terms of assembly, forms oligomers.

It localises to the cell membrane. The catalysed reaction is chloride(in) = chloride(out). Its function is as follows. Ligand-gated anion channel that allows the movement of chloride monoatomic anions across cell membranes when activated by Calcium (Ca2+). This is Bestrophin homolog 1 (best-1) from Caenorhabditis elegans.